A 219-amino-acid chain; its full sequence is Probable GTP-binding protein EngB (219 aa).

Residues 24-207 enclose the EngB-type G domain; it reads VQPEIAFAGR…HELIESWVRP (184 aa). Residues 32–39, 59–63, 81–84, 148–151, and 186–188 contribute to the GTP site; these read GRSNAGKS, GRTQH, DLPG, TKCD, and FSA. The Mg(2+) site is built by serine 39 and threonine 61.

It belongs to the TRAFAC class TrmE-Era-EngA-EngB-Septin-like GTPase superfamily. EngB GTPase family. It depends on Mg(2+) as a cofactor.

Functionally, necessary for normal cell division and for the maintenance of normal septation. This chain is Probable GTP-binding protein EngB, found in Burkholderia ambifaria (strain MC40-6).